The chain runs to 225 residues: pH-response regulator palI/RIM9 homolog 2 (225 aa).

The Cytoplasmic portion of the chain corresponds to 1–4; that stretch reads MLVK. The chain crosses the membrane as a helical span at residues 5-25; that stretch reads IVLVVLLTLALVFECFSTISV. Residues 26–87 lie on the Extracellular side of the membrane; it reads PITIGLYISE…PNHAKYALSN (62 aa). The chain crosses the membrane as a helical span at residues 88–108; that stretch reads LLLVHVLAFVCVTILWVFGML. Topologically, residues 109–120 are cytoplasmic; it reads TCFRCIKTSRRM. A helical transmembrane segment spans residues 121–141; the sequence is LIIAVLWSMLTFMVTLLGFLI. At 142 to 153 the chain is on the extracellular side; that stretch reads DILIFSSHVTWC. A helical membrane pass occupies residues 154 to 174; it reads TWLTLASAFFTVLSGTVLCVM. The Cytoplasmic portion of the chain corresponds to 175–225; it reads RRNLTYDKFLESKPEKHGVYVPLCRLNDVEELEIPWCNTMNHQALTAPTPM.

This sequence belongs to the palI/RIM9 family.

The protein resides in the cell membrane. Required for the proteolytic cleavage of the transcription factor RIM101 in response to alkaline ambient pH. In Kluyveromyces lactis (strain ATCC 8585 / CBS 2359 / DSM 70799 / NBRC 1267 / NRRL Y-1140 / WM37) (Yeast), this protein is pH-response regulator palI/RIM9 homolog 2.